We begin with the raw amino-acid sequence, 75 residues long: UPF0235 protein Mflv_3569 (75 aa).

Belongs to the UPF0235 family.

The protein is UPF0235 protein Mflv_3569 of Mycolicibacterium gilvum (strain PYR-GCK) (Mycobacterium gilvum (strain PYR-GCK)).